The chain runs to 437 residues: Rhoptry apical surface protein 2 (437 aa).

A C2 domain is found at 45–179 (GCLGSLFFYL…PRINLSLHKL (135 aa)). One can recognise a PH domain in the interval 230–338 (EGPLERLNAN…FIEKLRAYRE (109 aa)). Positions 341–437 (STRVPSQKGA…SVVGDEEPQT (97 aa)) are disordered. Positions 375-384 (RKSGGKKSRR) are enriched in basic residues.

Interacts with RASP1. Interacts with RASP3.

Its subcellular location is the cytoplasmic vesicle. It is found in the secretory vesicle. The protein localises to the rhoptry membrane. Functionally, essential for tachyzoite invasion of host cells by controlling rhoptry secretion. Binds to phosphatidic acid (PA) and phosphatidylinositol 4,5-bisphosphate (PIP2) lipids and thus, likely contributes to the assembly of the machinery that docks or primes the rhoptry to the parasite cell membrane prior to the fusion with the host cell membrane. This is Rhoptry apical surface protein 2 from Toxoplasma gondii (strain ATCC 50853 / GT1).